The sequence spans 1402 residues: DNA-directed RNA polymerase subunit beta' (1402 aa).

C71, C73, C86, and C89 together coordinate Zn(2+). Positions 462, 464, and 466 each coordinate Mg(2+). Zn(2+) is bound by residues C811, C885, C892, and C895.

This sequence belongs to the RNA polymerase beta' chain family. In terms of assembly, the RNAP catalytic core consists of 2 alpha, 1 beta, 1 beta' and 1 omega subunit. When a sigma factor is associated with the core the holoenzyme is formed, which can initiate transcription. Mg(2+) serves as cofactor. It depends on Zn(2+) as a cofactor.

The enzyme catalyses RNA(n) + a ribonucleoside 5'-triphosphate = RNA(n+1) + diphosphate. In terms of biological role, DNA-dependent RNA polymerase catalyzes the transcription of DNA into RNA using the four ribonucleoside triphosphates as substrates. This is DNA-directed RNA polymerase subunit beta' from Rhizobium johnstonii (strain DSM 114642 / LMG 32736 / 3841) (Rhizobium leguminosarum bv. viciae).